The sequence spans 253 residues: tRNA pseudouridine synthase A (253 aa).

The active-site Nucleophile is the Asp52. Tyr110 is a binding site for substrate.

It belongs to the tRNA pseudouridine synthase TruA family. As to quaternary structure, homodimer.

The enzyme catalyses uridine(38/39/40) in tRNA = pseudouridine(38/39/40) in tRNA. Formation of pseudouridine at positions 38, 39 and 40 in the anticodon stem and loop of transfer RNAs. This chain is tRNA pseudouridine synthase A, found in Thermus thermophilus (strain ATCC BAA-163 / DSM 7039 / HB27).